The sequence spans 303 residues: Recombination-associated protein RdgC (303 aa).

This sequence belongs to the RdgC family.

The protein localises to the cytoplasm. It localises to the nucleoid. In terms of biological role, may be involved in recombination. The sequence is that of Recombination-associated protein RdgC from Serratia proteamaculans (strain 568).